The chain runs to 432 residues: MGPRRLLLVAVGLSLCGPLLSSRVPMRQPESERMYATPYATPNPRSFFLRNPSEDTFEQFPLGDEEEKNESIPLEGRAVYLNKSRFPPMPPPPFISEDASGYLTSPWLTLFIPSVYTFVFIVSLPLNILAIAVFVFRMKVKKPAVVYMLHLAMADVLFVSVLPFKISYYFSGTDWQFGSGMCRFATAACYCNMYASIMLMTVISIDRFLAVVYPIQSLSWRTLGRANFTCVVIWVMAIMGVVPLLLKEQTTQVPGLNITTCHDVLNETLLHGFYSYYFSAFSAIFFLVPLIISTVCYTSIIRCLSSSAVANRSKKSRALFLSAAVFCIFIVCFGPTNVLLIVHYLLLSDSPGTETAYFAYLLCVCVTSVASCIDPLIYYYASSECQKHLYSILCCRESSDSNSCNSTGQLMPSKMDTCSSHLNNSIYKKLLA.

The signal sequence occupies residues 1 to 21; sequence MGPRRLLLVAVGLSLCGPLLS. A propeptide spans 22–45 (removed for receptor activation); sequence SRVPMRQPESERMYATPYATPNPR. The Extracellular portion of the chain corresponds to 46-109; that stretch reads SFFLRNPSED…SGYLTSPWLT (64 aa). N-linked (GlcNAc...) asparagine glycosylation is found at asparagine 69 and asparagine 82. Residues 110 to 135 form a helical membrane-spanning segment; that stretch reads LFIPSVYTFVFIVSLPLNILAIAVFV. Residues 136–144 are Cytoplasmic-facing; it reads FRMKVKKPA. Residues 145 to 164 form a helical membrane-spanning segment; sequence VVYMLHLAMADVLFVSVLPF. Residues 165–183 lie on the Extracellular side of the membrane; that stretch reads KISYYFSGTDWQFGSGMCR. Cysteine 182 and cysteine 261 are oxidised to a cystine. The chain crosses the membrane as a helical span at residues 184–205; sequence FATAACYCNMYASIMLMTVISI. Residues 206–225 are Cytoplasmic-facing; the sequence is DRFLAVVYPIQSLSWRTLGR. A helical transmembrane segment spans residues 226–246; the sequence is ANFTCVVIWVMAIMGVVPLLL. Residues 247 to 275 lie on the Extracellular side of the membrane; the sequence is KEQTTQVPGLNITTCHDVLNETLLHGFYS. N-linked (GlcNAc...) asparagine glycans are attached at residues asparagine 257 and asparagine 266. Residues 276 to 295 form a helical membrane-spanning segment; it reads YYFSAFSAIFFLVPLIISTV. The Cytoplasmic portion of the chain corresponds to 296 to 318; it reads CYTSIIRCLSSSAVANRSKKSRA. A helical membrane pass occupies residues 319 to 341; it reads LFLSAAVFCIFIVCFGPTNVLLI. The Extracellular portion of the chain corresponds to 342 to 357; sequence VHYLLLSDSPGTETAY. The helical transmembrane segment at 358 to 381 threads the bilayer; the sequence is FAYLLCVCVTSVASCIDPLIYYYA. Residues 382–432 are Cytoplasmic-facing; that stretch reads SSECQKHLYSILCCRESSDSNSCNSTGQLMPSKMDTCSSHLNNSIYKKLLA. Residue serine 425 is modified to Phosphoserine.

Belongs to the G-protein coupled receptor 1 family. In terms of processing, proteolytic cleavage by thrombin generates a new N-terminus that functions as a tethered ligand. Also proteolytically cleaved by cathepsin CTSG. Post-translationally, phosphorylated in the C-terminal tail; probably mediating desensitization prior to the uncoupling and internalization of the receptor. As to expression, expressed in primary cultured oligodendrocytes.

The protein resides in the cell membrane. Its function is as follows. High affinity receptor that binds the activated thrombin, leading to calcium release from intracellular stores. The thrombin-activated receptor signaling pathway is mediated through PTX-insensitive G proteins, activation of phospholipase C resulting in the production of 1D-myo-inositol 1,4,5-trisphosphate (InsP3) which binds to InsP3 receptors causing calcium release from the stores. In astrocytes, the calcium released into the cytosol allows the Ca(2+)-dependent release of L-glutamate into the synaptic cleft through BEST1, that targets the neuronal postsynaptic GRIN2A/NMDAR receptor resulting in the synaptic plasticity regulation. May play a role in platelets activation and in vascular development. Mediates up-regulation of pro-inflammatory cytokines, such as MCP-1/CCL2 and IL6, triggered by coagulation factor Xa (F10) in cardiac fibroblasts and umbilical vein endothelial cells. In Rattus norvegicus (Rat), this protein is Proteinase-activated receptor 1.